The primary structure comprises 34 residues: MIIIFIELCRIADSLLWIPKSSRRTSSISTYLIL.

This is an uncharacterized protein from Saccharomyces cerevisiae (strain ATCC 204508 / S288c) (Baker's yeast).